A 367-amino-acid chain; its full sequence is F-box only protein 25 (367 aa).

The tract at residues 1–83 (MPFLGQDWRS…NDTNTQSFYR (83 aa)) is interaction with beta-actin. The 49-residue stretch at 226–274 (LTLSDLPLHMLNNILYRFSDGWDIITLGQVTPTLYMLSEDRQLWKKLCQ) folds into the F-box domain.

In terms of assembly, part of a SCF (SKP1-cullin-F-box) protein ligase complex consisting of FBXO25, SKP1, CUL1 and RBX1. Interacts directly with SKP1 and CUL1. Interacts (via C-terminus) with beta-actin (via N-terminus). Expressed in all brain tissue observed.

Its subcellular location is the nucleus. It participates in protein modification; protein ubiquitination. In terms of biological role, substrate-recognition component of the SCF (SKP1-CUL1-F-box protein)-type E3 ubiquitin ligase complex. May play a role in accumulation of expanded polyglutamine (polyQ) protein huntingtin (HTT). This Homo sapiens (Human) protein is F-box only protein 25 (FBXO25).